Reading from the N-terminus, the 229-residue chain is Vitellogenin (229 aa).

Residues 1–136 (IVMLKNDNVE…SWILAAESCR (136 aa)) form the VWFD domain. N-linked (GlcNAc...) asparagine glycosylation occurs at Asn-198.

Expressed in liver, ovary and, to a lesser extent, in muscle, intestine, skin, kidney and heart.

In terms of biological role, precursor of the egg-yolk proteins that are sources of nutrients during early development of oviparous organisms. Its function is as follows. Probably binds tetrodotoxin in the ovary. The sequence is that of Vitellogenin from Takifugu pardalis (Panther puffer).